The following is a 182-amino-acid chain: ATP synthase subunit delta (182 aa).

The protein belongs to the ATPase delta chain family. F-type ATPases have 2 components, F(1) - the catalytic core - and F(0) - the membrane proton channel. F(1) has five subunits: alpha(3), beta(3), gamma(1), delta(1), epsilon(1). CF(0) has four main subunits: a(1), b(1), b'(1) and c(10-14). The alpha and beta chains form an alternating ring which encloses part of the gamma chain. F(1) is attached to F(0) by a central stalk formed by the gamma and epsilon chains, while a peripheral stalk is formed by the delta, b and b' chains.

It is found in the cellular thylakoid membrane. F(1)F(0) ATP synthase produces ATP from ADP in the presence of a proton or sodium gradient. F-type ATPases consist of two structural domains, F(1) containing the extramembraneous catalytic core and F(0) containing the membrane proton channel, linked together by a central stalk and a peripheral stalk. During catalysis, ATP synthesis in the catalytic domain of F(1) is coupled via a rotary mechanism of the central stalk subunits to proton translocation. In terms of biological role, this protein is part of the stalk that links CF(0) to CF(1). It either transmits conformational changes from CF(0) to CF(1) or is implicated in proton conduction. In Synechococcus sp. (strain CC9605), this protein is ATP synthase subunit delta.